The chain runs to 185 residues: Elongation factor P (185 aa).

Belongs to the elongation factor P family.

It localises to the cytoplasm. It functions in the pathway protein biosynthesis; polypeptide chain elongation. Involved in peptide bond synthesis. Stimulates efficient translation and peptide-bond synthesis on native or reconstituted 70S ribosomes in vitro. Probably functions indirectly by altering the affinity of the ribosome for aminoacyl-tRNA, thus increasing their reactivity as acceptors for peptidyl transferase. This is Elongation factor P from Staphylococcus carnosus (strain TM300).